Consider the following 329-residue polypeptide: NADH-quinone oxidoreductase subunit H (329 aa).

The next 9 membrane-spanning stretches (helical) occupy residues 9–29 (LIKI…ATYI), 42–62 (GPCY…IKLF), 75–95 (FIFT…MAPI), 117–137 (IGFL…ILAG), 154–174 (IQLL…LMVV), 188–208 (GGFL…FLIA), 238–258 (LKWG…SFVI), 269–291 (WGFI…LSMW), and 309–329 (WKIM…IILI).

Belongs to the complex I subunit 1 family. NDH-1 is composed of 14 different subunits. Subunits NuoA, H, J, K, L, M, N constitute the membrane sector of the complex.

It localises to the cell inner membrane. The enzyme catalyses a quinone + NADH + 5 H(+)(in) = a quinol + NAD(+) + 4 H(+)(out). NDH-1 shuttles electrons from NADH, via FMN and iron-sulfur (Fe-S) centers, to quinones in the respiratory chain. The immediate electron acceptor for the enzyme in this species is believed to be ubiquinone. Couples the redox reaction to proton translocation (for every two electrons transferred, four hydrogen ions are translocated across the cytoplasmic membrane), and thus conserves the redox energy in a proton gradient. This subunit may bind ubiquinone. The protein is NADH-quinone oxidoreductase subunit H of Helicobacter pylori (strain ATCC 700392 / 26695) (Campylobacter pylori).